We begin with the raw amino-acid sequence, 190 residues long: UPF0200 protein TSIB_0920 (190 aa).

7–14 provides a ligand contact to ATP; sequence GMPGSGKG.

The protein belongs to the UPF0200 family.

The protein is UPF0200 protein TSIB_0920 of Thermococcus sibiricus (strain DSM 12597 / MM 739).